The primary structure comprises 186 residues: Peptidyl-tRNA hydrolase (186 aa).

A tRNA-binding site is contributed by Tyr-14. The active-site Proton acceptor is the His-19. TRNA-binding residues include Tyr-60 and Asn-62.

The protein belongs to the PTH family. In terms of assembly, monomer.

It localises to the cytoplasm. It catalyses the reaction an N-acyl-L-alpha-aminoacyl-tRNA + H2O = an N-acyl-L-amino acid + a tRNA + H(+). Hydrolyzes ribosome-free peptidyl-tRNAs (with 1 or more amino acids incorporated), which drop off the ribosome during protein synthesis, or as a result of ribosome stalling. In terms of biological role, catalyzes the release of premature peptidyl moieties from peptidyl-tRNA molecules trapped in stalled 50S ribosomal subunits, and thus maintains levels of free tRNAs and 50S ribosomes. This Mycoplasmopsis pulmonis (strain UAB CTIP) (Mycoplasma pulmonis) protein is Peptidyl-tRNA hydrolase.